The primary structure comprises 1411 residues: Protein three rows (1411 aa).

The interval 1065–1071 is separase cleavage-site; the sequence is VEPIRKQ. 3 disordered regions span residues 1221 to 1240, 1268 to 1301, and 1330 to 1411; these read LEPP…NISP, VRPA…KSPK, and AKST…RHRN. Composition is skewed to low complexity over residues 1270-1289 and 1386-1398; these read PASS…NASS and TAEQ…TATP.

In terms of assembly, interacts with pim and Sse. Cleavage of thr contributes to inactivation of Sse.

The protein resides in the cytoplasm. Required specifically for chromosome disjunction during all mitoses; maternally provided protein is sufficient until mitosis 14 then zygotic protein is required. Involved in formation and/or maintenance of epithelial structures: bud extension during Malpighian tubule development, and foregut and hindgut morphogenesis. This Drosophila virilis (Fruit fly) protein is Protein three rows (thr).